The following is a 100-amino-acid chain: ATP synthase subunit c (100 aa).

Transmembrane regions (helical) follow at residues 26-46 and 71-91; these read FSVV…AIGM and MFIA…IALI.

It belongs to the ATPase C chain family. As to quaternary structure, F-type ATPases have 2 components, F(1) - the catalytic core - and F(0) - the membrane proton channel. F(1) has five subunits: alpha(3), beta(3), gamma(1), delta(1), epsilon(1). F(0) has three main subunits: a(1), b(2) and c(10-14). The alpha and beta chains form an alternating ring which encloses part of the gamma chain. F(1) is attached to F(0) by a central stalk formed by the gamma and epsilon chains, while a peripheral stalk is formed by the delta and b chains.

The protein resides in the cell inner membrane. In terms of biological role, f(1)F(0) ATP synthase produces ATP from ADP in the presence of a proton or sodium gradient. F-type ATPases consist of two structural domains, F(1) containing the extramembraneous catalytic core and F(0) containing the membrane proton channel, linked together by a central stalk and a peripheral stalk. During catalysis, ATP synthesis in the catalytic domain of F(1) is coupled via a rotary mechanism of the central stalk subunits to proton translocation. Key component of the F(0) channel; it plays a direct role in translocation across the membrane. A homomeric c-ring of between 10-14 subunits forms the central stalk rotor element with the F(1) delta and epsilon subunits. The chain is ATP synthase subunit c from Campylobacter fetus subsp. fetus (strain 82-40).